The following is a 295-amino-acid chain: Probable palmitoyltransferase ZDHHC24 (295 aa).

Topologically, residues 1 to 20 (MTSFMSRVWCKVESTGRQLP) are cytoplasmic. The helical transmembrane segment at 21–41 (IVLNAVLVFSITAEVSYLVLV) threads the bilayer. The Extracellular portion of the chain corresponds to 42-60 (EAPFEPEQKKTDWSTIWTG). Residues 61–81 (LHLFAQYFMLGNITWNASLFV) traverse the membrane as a helical segment. Residues 82 to 151 (KTNPSIRGVF…HNYRYFLTCL (70 aa)) lie on the Cytoplasmic side of the membrane. The DHHC domain occupies 102–152 (RYCYNCETHTPPRCSHCYDCNVCVLRRDHHCVFFGQCVGFHNYRYFLTCLL). Cys132 functions as the S-palmitoyl cysteine intermediate in the catalytic mechanism. A helical membrane pass occupies residues 152-172 (LFMWAGLLYAVVMNAEVFIFI). Over 173–176 (LKEG) the chain is Extracellular. The helical transmembrane segment at 177-197 (VTFHSVMLLLVPWIMLVSGQV) threads the bilayer. The Cytoplasmic segment spans residues 198–203 (TTRAFA). Residues 204 to 224 (FAFIADTCVVGFLLVAAFLFF) form a helical membrane-spanning segment. Topologically, residues 225–295 (HVALMLRGQT…SLEPKKQAVH (71 aa)) are extracellular.

This sequence belongs to the DHHC palmitoyltransferase family.

It is found in the membrane. The enzyme catalyses L-cysteinyl-[protein] + hexadecanoyl-CoA = S-hexadecanoyl-L-cysteinyl-[protein] + CoA. Functionally, probable palmitoyltransferase that could catalyze the addition of palmitate onto various protein substrates. This chain is Probable palmitoyltransferase ZDHHC24, found in Danio rerio (Zebrafish).